Here is a 163-residue protein sequence, read N- to C-terminus: Nucleotide-binding protein C8J_0350 (163 aa).

It belongs to the YajQ family.

Functionally, nucleotide-binding protein. The polypeptide is Nucleotide-binding protein C8J_0350 (Campylobacter jejuni subsp. jejuni serotype O:6 (strain 81116 / NCTC 11828)).